The following is a 902-amino-acid chain: Ribonuclease E (902 aa).

An S1 motif domain is found at 39 to 119 (SNIYKGKITR…GTKGAALTTF (81 aa)). Residues Asp-303 and Asp-346 each contribute to the Mg(2+) site. Residues Cys-404 and Cys-407 each coordinate Zn(2+). Residues 404 to 407 (CPRC) are required for zinc-mediated homotetramerization and catalytic activity. The segment at 881–902 (GKNSAGVHSATNFSNSPVSKLK) is disordered. Over residues 889 to 902 (SATNFSNSPVSKLK) the composition is skewed to polar residues.

This sequence belongs to the RNase E/G family. RNase E subfamily. In terms of assembly, component of the RNA degradosome, which is a multiprotein complex involved in RNA processing and mRNA degradation. Within the RNA degradosome, RNase E assembles into a homotetramer formed by a dimer of dimers. Zn(2+) is required as a cofactor. Mg(2+) serves as cofactor.

Its subcellular location is the cytoplasm. The protein localises to the cell inner membrane. It carries out the reaction Endonucleolytic cleavage of single-stranded RNA in A- and U-rich regions.. Endoribonuclease that plays a central role in RNA processing and decay. Required for the maturation of 5S and 16S rRNAs and the majority of tRNAs. Also involved in the degradation of most mRNAs. The chain is Ribonuclease E from Buchnera aphidicola subsp. Acyrthosiphon pisum (strain APS) (Acyrthosiphon pisum symbiotic bacterium).